The sequence spans 344 residues: Nuclear distribution protein nudE homolog 1 (344 aa).

The tract at residues 1 to 93 (MEDSGKTFGS…MQHSEGYRQI (93 aa)) is self-association. Residues 18–188 (WRDLAMTYKQ…ELAVQQKQDK (171 aa)) adopt a coiled-coil conformation. The span at 30-47 (ENTQEELREFQEGSREYE) shows a compositional bias: basic and acidic residues. The disordered stretch occupies residues 30–65 (ENTQEELREFQEGSREYEAELETQLQQAETRNRDLL). Residues 88–156 (EGYRQISALE…ERNAFLESEL (69 aa)) are interaction with PAFAH1B1. Residues 167–290 (QRLKDEARDL…QSPSRKSGPA (124 aa)) form an interaction with CENPF region. Residues 181 to 243 (AVQQKQDKPR…CGLGSPSSGT (63 aa)) are disordered. Residues 208–230 (ATGSAPSTPITHQGSSSGLNTPE) show a composition bias toward polar residues. At S211 the chain carries Phosphoserine. Phosphothreonine is present on residues T215, T228, T243, and T246. A lipid anchor (S-palmitoyl cysteine; by ZDHHC2, ZDHHC3 and ZDHHC7) is attached at C274. The interval 279–337 (YDQSPSRKSGPALGRGTKNRDGIDRRPGSTAVGDKGSGKRLEFAKPSSQLSSPALPSTQ) is disordered. S282 carries the phosphoserine modification. The segment covering 296–305 (KNRDGIDRRP) has biased composition (basic and acidic residues). Residues 324–335 (PSSQLSSPALPS) are compositionally biased toward low complexity.

The protein belongs to the nudE family. As to quaternary structure, homodimer. Interacts with CNTRL, LIS1, dynein, SLMAP and TCP1. Interacts with CENPF, dynactin, tubulin gamma, PAFAH1B1, PCM1 and PCNT. Interacts with ZNF365. Interacts with GTP-bound RAB9A and RAB9B; the interaction leads to RAB9-dynein motor tethering. Interacts (via C-terminus) with MCRS1 (via C-terminus); phosphorylation of NDE1 inhibits the interaction. Post-translationally, phosphorylated in mitosis. Phosphorylation at Thr-246 is essential for the G2/M transition. In terms of tissue distribution, expressed in brain, heart, kidney, liver, lung, skeletal muscle, spleen and testis.

It localises to the cytoplasm. The protein localises to the cytoskeleton. The protein resides in the microtubule organizing center. It is found in the centrosome. Its subcellular location is the spindle. It localises to the chromosome. The protein localises to the centromere. The protein resides in the kinetochore. It is found in the cleavage furrow. Its subcellular location is the cytoplasmic vesicle membrane. Its function is as follows. Required for centrosome duplication and formation and function of the mitotic spindle. Essential for the development of the cerebral cortex. May regulate the production of neurons by controlling the orientation of the mitotic spindle during division of cortical neuronal progenitors of the proliferative ventricular zone of the brain. Orientation of the division plane perpendicular to the layers of the cortex gives rise to two proliferative neuronal progenitors whereas parallel orientation of the division plane yields one proliferative neuronal progenitor and a postmitotic neuron. A premature shift towards a neuronal fate within the progenitor population may result in an overall reduction in the final number of neurons and an increase in the number of neurons in the deeper layers of the cortex. Acts as a RAB9A/B effector that tethers RAB9-associated late endosomes to the dynein motor for their retrograde transport to the trans-Golgi network. The chain is Nuclear distribution protein nudE homolog 1 from Rattus norvegicus (Rat).